The chain runs to 224 residues: Peptidyl-prolyl cis-trans isomerase FKBP3 (224 aa).

A2 carries the N-acetylalanine modification. A Phosphoserine modification is found at S36. Positions 89–102 (KLNEDKPKETKSEE) are enriched in basic and acidic residues. Residues 89-113 (KLNEDKPKETKSEETLDEGPPKYTK) are disordered. N6-acetyllysine is present on K99. One can recognise a PPIase FKBP-type domain in the interval 128-224 (GDVVHCWYTG…IFEVELVDID (97 aa)). S152 is subject to Phosphoserine. N6-acetyllysine is present on K170.

This sequence belongs to the FKBP-type PPIase family.

It localises to the nucleus. It catalyses the reaction [protein]-peptidylproline (omega=180) = [protein]-peptidylproline (omega=0). Its activity is regulated as follows. Inhibited preferentially by rapamycin over FK506. Its function is as follows. FK506- and rapamycin-binding proteins (FKBPs) constitute a family of receptors for the two immunosuppressants which inhibit T-cell proliferation by arresting two dinstinct cytoplasmic signal transmission pathways. PPIases accelerate the folding of proteins. This is Peptidyl-prolyl cis-trans isomerase FKBP3 (FKBP3) from Bos taurus (Bovine).